The primary structure comprises 240 residues: Small ribosomal subunit protein uS3 (240 aa).

A KH type-2 domain is found at 39–109 (IRQYIEKTLN…QIRVNVIEVP (71 aa)). The disordered stretch occupies residues 219–240 (APPSQPRRKSRRQQFDDRSQDG). Over residues 231 to 240 (QQFDDRSQDG) the composition is skewed to basic and acidic residues.

Belongs to the universal ribosomal protein uS3 family. As to quaternary structure, part of the 30S ribosomal subunit. Forms a tight complex with proteins S10 and S14.

Functionally, binds the lower part of the 30S subunit head. Binds mRNA in the 70S ribosome, positioning it for translation. In Synechocystis sp. (strain ATCC 27184 / PCC 6803 / Kazusa), this protein is Small ribosomal subunit protein uS3.